We begin with the raw amino-acid sequence, 499 residues long: Protein-cysteine N-palmitoyltransferase HHAT (499 aa).

The Cytoplasmic portion of the chain corresponds to 1–5; that stretch reads MLPGW. A helical membrane pass occupies residues 6-22; sequence ELTLCLLVSLGFHFRSF. Residues 23–67 lie on the Lumenal side of the membrane; sequence YEVYKVSREHEEELDQEFELEMDTLFGGLKKDPTDFEWNFWMEWG. The chain crosses the membrane as a helical span at residues 68-84; it reads KRRLVWLFIGHMAVSQL. Topologically, residues 85–94 are cytoplasmic; that stretch reads ATLLTKKHRP. The essential for palmitoylation of SHH stretch occupies residues 91–155; sequence KHRPWIVMVY…TLRLQSVEEV (65 aa). The stretch at 95–119 is an intramembrane region; that stretch reads WIVMVYGMWACWCVLGAPGVVMVLL. Residues 120–131 are Cytoplasmic-facing; the sequence is HSTIAFCVAQFR. A helical transmembrane segment spans residues 132–148; it reads SVLLSWLCSLLLLSTLR. The Lumenal portion of the chain corresponds to 149 to 162; the sequence is LQSVEEVKRRWYKT. Residues 163–183 traverse the membrane as a helical segment; sequence ENEYYLLQFTLTVRCLYYTSF. Over 184–208 the chain is Cytoplasmic; it reads SLELCRQPPSAQPTPSAQGASHSYP. The S-palmitoyl cysteine moiety is linked to residue cysteine 188. Residues 209–223 lie within the membrane without spanning it; it reads WLLTYVFYYPVFHNG. At 224–249 the chain is on the cytoplasmic side; the sequence is PILNFPEFFRQMQQPELNSLQHSLCI. The S-palmitoyl cysteine moiety is linked to residue cysteine 248. Residues 250–277 traverse the membrane as a helical segment; the sequence is VAKGLGRLLCWWWLAELMVHLMYMHALY. The Lumenal portion of the chain corresponds to 278–287; it reads SSAPLLESVS. A helical membrane pass occupies residues 288–316; it reads CWTLGGLALAQVLFFYVKYLVLFGVPALL. At 317-369 the chain is on the cytoplasmic side; it reads MRLDGLTPPPLPRCVSTMFSFTGMWRYFDVGLHNFLIRYVYIPLGGSQHGLLG. Residue cysteine 330 is the site of S-palmitoyl cysteine attachment. Residues 370-386 form a helical membrane-spanning segment; it reads TLLSTATTFAFVSYWHG. Histidine 385 is a catalytic residue. Topologically, residues 387 to 389 are lumenal; sequence SYE. A helical membrane pass occupies residues 390 to 405; it reads DLWCWAALNWLGVTVE. Residues 406–433 are Cytoplasmic-facing; the sequence is SGVRRLLETPCVRETLARHLSPQAHHRL. Cysteine 416 carries the S-palmitoyl cysteine lipid modification. A helical transmembrane segment spans residues 434–454; it reads HALLAACSTSMLILFNLVFLG. Position 454 to 461 (454 to 461) interacts with GTP; that stretch reads GGIQVGKT. Residues 455–468 are Lumenal-facing; that stretch reads GIQVGKTYWNRIFL. Residues 469–487 form a helical membrane-spanning segment; sequence QGWPWVTLSVLGFLYCYSH. Residues 488–499 are Cytoplasmic-facing; it reads VDIAWAQTYTVL.

This sequence belongs to the membrane-bound acyltransferase family. HHAT subfamily.

The protein resides in the endoplasmic reticulum membrane. It is found in the golgi apparatus membrane. It catalyses the reaction N-terminal L-cysteinyl-[protein] + hexadecanoyl-CoA = N-terminal N-hexadecanoyl-L-cysteinyl-[protein] + CoA + H(+). The catalysed reaction is N-terminal L-cysteinyl-[protein]-C-terminal glycyl cholesterol ester + hexadecanoyl-CoA = N-terminal N-hexadecanoyl-L-cysteinyl-[protein]-C-terminal glycyl cholesterol ester + CoA + H(+). In terms of biological role, palmitoyl acyltransferase that catalyzes N-terminal palmitoylation of SHH; which is required for SHH signaling during limb development. It also catalyzes N-terminal palmitoylation of DHH. Promotes the transfer of palmitoyl-CoA from the cytoplasmic to the luminal side of the endoplasmic reticulum membrane, where SHH palmitoylation occurs. Plays a role in proper testis cord formation and the differentiation of Leydig cells. The polypeptide is Protein-cysteine N-palmitoyltransferase HHAT (Hhat) (Mus musculus (Mouse)).